We begin with the raw amino-acid sequence, 215 residues long: Chaperone protein TorD (215 aa).

It belongs to the TorD/DmsD family. TorD subfamily.

The protein localises to the cytoplasm. Functionally, involved in the biogenesis of TorA. Acts on TorA before the insertion of the molybdenum cofactor and, as a result, probably favors a conformation of the apoenzyme that is competent for acquiring the cofactor. The protein is Chaperone protein TorD of Vibrio parahaemolyticus serotype O3:K6 (strain RIMD 2210633).